The following is a 150-amino-acid chain: Probable NADH dehydrogenase [ubiquinone] 1 alpha subcomplex subunit 5 (150 aa).

Belongs to the complex I NDUFA5 subunit family. As to quaternary structure, complex I is composed of 45 different subunits.

Its subcellular location is the mitochondrion inner membrane. In terms of biological role, accessory subunit of the mitochondrial membrane respiratory chain NADH dehydrogenase (Complex I), that is believed not to be involved in catalysis. Complex I functions in the transfer of electrons from NADH to the respiratory chain. The immediate electron acceptor for the enzyme is believed to be ubiquinone. The sequence is that of Probable NADH dehydrogenase [ubiquinone] 1 alpha subcomplex subunit 5 from Caenorhabditis elegans.